Here is an 87-residue protein sequence, read N- to C-terminus: Putative regulatory protein BCQ_3657 (87 aa).

Belongs to the RemA family.

This is Putative regulatory protein BCQ_3657 from Bacillus cereus (strain Q1).